The sequence spans 101 residues: Large ribosomal subunit protein uL23 (101 aa).

The protein belongs to the universal ribosomal protein uL23 family. In terms of assembly, part of the 50S ribosomal subunit. Contacts protein L29, and trigger factor when it is bound to the ribosome.

In terms of biological role, one of the early assembly proteins it binds 23S rRNA. One of the proteins that surrounds the polypeptide exit tunnel on the outside of the ribosome. Forms the main docking site for trigger factor binding to the ribosome. This Pseudarthrobacter chlorophenolicus (strain ATCC 700700 / DSM 12829 / CIP 107037 / JCM 12360 / KCTC 9906 / NCIMB 13794 / A6) (Arthrobacter chlorophenolicus) protein is Large ribosomal subunit protein uL23.